The following is a 95-amino-acid chain: Ribonuclease P protein component 1 (95 aa).

The protein belongs to the eukaryotic/archaeal RNase P protein component 1 family. As to quaternary structure, consists of a catalytic RNA component and at least 4 protein subunits. Forms a subcomplex with Rnp4 which stimulates the catalytic RNA.

It localises to the cytoplasm. The catalysed reaction is Endonucleolytic cleavage of RNA, removing 5'-extranucleotides from tRNA precursor.. Functionally, part of ribonuclease P, a protein complex that generates mature tRNA molecules by cleaving their 5'-ends. This chain is Ribonuclease P protein component 1, found in Methanocaldococcus jannaschii (strain ATCC 43067 / DSM 2661 / JAL-1 / JCM 10045 / NBRC 100440) (Methanococcus jannaschii).